Consider the following 73-residue polypeptide: Large ribosomal subunit protein bL27c (73 aa).

The protein belongs to the bacterial ribosomal protein bL27 family.

It localises to the plastid. Its subcellular location is the chloroplast. The chain is Large ribosomal subunit protein bL27c (rpl27) from Chrysochromulina alifera (Plankton alga).